The chain runs to 239 residues: 3-dehydroquinate dehydratase (239 aa).

3-dehydroquinate is bound by residues 35-37 (ELR) and arginine 70. The active-site Proton donor/acceptor is the histidine 133. Lysine 160 acts as the Schiff-base intermediate with substrate in catalysis. Residues arginine 202 and glutamine 225 each coordinate 3-dehydroquinate.

The protein belongs to the type-I 3-dehydroquinase family. Homodimer.

It catalyses the reaction 3-dehydroquinate = 3-dehydroshikimate + H2O. It functions in the pathway metabolic intermediate biosynthesis; chorismate biosynthesis; chorismate from D-erythrose 4-phosphate and phosphoenolpyruvate: step 3/7. Functionally, involved in the third step of the chorismate pathway, which leads to the biosynthesis of aromatic amino acids. Catalyzes the cis-dehydration of 3-dehydroquinate (DHQ) and introduces the first double bond of the aromatic ring to yield 3-dehydroshikimate. This Staphylococcus saprophyticus subsp. saprophyticus (strain ATCC 15305 / DSM 20229 / NCIMB 8711 / NCTC 7292 / S-41) protein is 3-dehydroquinate dehydratase.